The chain runs to 131 residues: MHTQQLISQIESQYLKDNLPEICVGDTVKVGVLIQEEDNKNSGEKERIQFYEGVVISLSKLKNINGTIRVRRILQGIGIERTFLVHSPLIKSINIIRRSKVRRAKLYYLRTLTGKATRLKQRLIKHYRLIY.

This sequence belongs to the bacterial ribosomal protein bL19 family.

It localises to the plastid. It is found in the cyanelle. In terms of biological role, this protein is located at the 30S-50S ribosomal subunit interface and may play a role in the structure and function of the aminoacyl-tRNA binding site. This is Large ribosomal subunit protein bL19c (rpl19) from Cyanophora paradoxa.